The sequence spans 847 residues: A-kinase anchor protein 4 (847 aa).

A propeptide spanning residues 1-187 is cleaved from the precursor; sequence MIAYCGTTKM…MAASKNTNNN (187 aa). Phosphoserine occurs at positions 95, 129, 189, and 203. A compositionally biased stretch (polar residues) spans 182-204; it reads KNTNNNQSPSNPATKSPSNQRSV. The disordered stretch occupies residues 182–209; the sequence is KNTNNNQSPSNPATKSPSNQRSVATPDG. Position 206 is a phosphothreonine (T206). S212, S225, and S270 each carry phosphoserine. Residues 218–231 are interaction with Prkar1a and Prkar2a; that stretch reads YYVNRLSSLVIQMA. Y300 is modified (phosphotyrosine). 10 positions are modified to phosphoserine: S301, S304, S340, S430, S441, S443, S462, S491, S496, and S503. The interval 334-343 is PKA-RI subunit binding domain; the sequence is YANQVASDMM. T505 carries the post-translational modification Phosphothreonine. The tract at residues 511–536 is disordered; it reads KQGTQGRVPNKVCPSKDEKREKISPS. The segment covering 524-533 has biased composition (basic and acidic residues); it reads PSKDEKREKI. Phosphoserine is present on residues S536 and S581. The disordered stretch occupies residues 583 to 613; it reads QYEKSGGGQSSKSLSMKHFESRGAPGPSTCA. 8 positions are modified to phosphoserine: S626, S631, S648, S650, S674, S677, S700, and S729. A disordered region spans residues 655 to 677; sequence CCDSRSKQAAPVAKRPEDQSQDS.

The protein belongs to the AKAP110 family. Interacts with PRKAR1A and PRKAR2A. Interacts with ENO4. Interacts with QRICH2. Phosphorylated by STK33 during sperm flagella assembly. Expressed in flagella of epididymal sperm.

It localises to the cell projection. Its subcellular location is the cilium. The protein resides in the flagellum. Functionally, major structural component of sperm fibrous sheath. May play a role in sperm motility. The chain is A-kinase anchor protein 4 from Rattus norvegicus (Rat).